Consider the following 305-residue polypeptide: Aspartate carbamoyltransferase catalytic subunit (305 aa).

Residues R54 and T55 each contribute to the carbamoyl phosphate site. Position 82 (K82) interacts with L-aspartate. Residues R104, H132, and Q135 each coordinate carbamoyl phosphate. 2 residues coordinate L-aspartate: R165 and R218. The carbamoyl phosphate site is built by G259 and P260.

Belongs to the aspartate/ornithine carbamoyltransferase superfamily. ATCase family. In terms of assembly, heterododecamer (2C3:3R2) of six catalytic PyrB chains organized as two trimers (C3), and six regulatory PyrI chains organized as three dimers (R2).

It catalyses the reaction carbamoyl phosphate + L-aspartate = N-carbamoyl-L-aspartate + phosphate + H(+). Its pathway is pyrimidine metabolism; UMP biosynthesis via de novo pathway; (S)-dihydroorotate from bicarbonate: step 2/3. Catalyzes the condensation of carbamoyl phosphate and aspartate to form carbamoyl aspartate and inorganic phosphate, the committed step in the de novo pyrimidine nucleotide biosynthesis pathway. This is Aspartate carbamoyltransferase catalytic subunit from Caldicellulosiruptor bescii (strain ATCC BAA-1888 / DSM 6725 / KCTC 15123 / Z-1320) (Anaerocellum thermophilum).